The following is a 225-amino-acid chain: Agamous-like MADS-box protein TM6 (225 aa).

In terms of domain architecture, MADS-box spans 1-61 (MGRGKIEIKR…GKFHEYTSPT (61 aa)). The K-box domain maps to 84-174 (YERMQENLRK…LLNFEAKCDD (91 aa)).

As to expression, expressed during flower development in stamens, petals and carpels. Expressed in fruits and seeds.

Its subcellular location is the nucleus. Functionally, probable transcription factor involved in flower development. The chain is Agamous-like MADS-box protein TM6 from Vitis vinifera (Grape).